A 125-amino-acid polypeptide reads, in one-letter code: Acidic phospholipase A2 HTe (125 aa).

Disulfide bonds link Cys11–Cys77, Cys27–Cys124, Cys29–Cys45, Cys44–Cys105, Cys51–Cys98, Cys61–Cys91, and Cys84–Cys96. Ca(2+) is bound by residues Tyr28, Gly30, and Gly32. The active site involves His48. Asp49 is a binding site for Ca(2+). Asp99 is an active-site residue.

This sequence belongs to the phospholipase A2 family. Group I subfamily. D49 sub-subfamily. It depends on Ca(2+) as a cofactor. In terms of processing, no glycosylation was detected on this protein. In terms of tissue distribution, expressed by the venom gland.

The protein resides in the secreted. The catalysed reaction is a 1,2-diacyl-sn-glycero-3-phosphocholine + H2O = a 1-acyl-sn-glycero-3-phosphocholine + a fatty acid + H(+). Functionally, snake venom phospholipase A2 (PLA2) that blocks neuromuscular transmission, but that does not produce blockade by virtue of a selective action on nerve endings. Instead, the toxin acts both on nerve and on muscle. PLA2 catalyzes the calcium-dependent hydrolysis of the 2-acyl groups in 3-sn-phosphoglycerides. In Notechis scutatus scutatus (Mainland tiger snake), this protein is Acidic phospholipase A2 HTe.